The following is a 352-amino-acid chain: Photosystem II D2 protein (352 aa).

A helical membrane pass occupies residues cysteine 40–threonine 60. Histidine 117 is a binding site for chlorophyll a. Residues glycine 124–proline 140 traverse the membrane as a helical segment. Residues glutamine 129 and asparagine 142 each coordinate pheophytin a. The chain crosses the membrane as a helical span at residues valine 152–alanine 165. Residue histidine 197 participates in chlorophyll a binding. The helical transmembrane segment at alanine 207–aspartate 227 threads the bilayer. The a plastoquinone site is built by histidine 214 and phenylalanine 261. Fe cation is bound at residue histidine 214. Histidine 268 lines the Fe cation pocket. A helical transmembrane segment spans residues glycine 278–arginine 294.

Belongs to the reaction center PufL/M/PsbA/D family. In terms of assembly, PSII is composed of 1 copy each of membrane proteins PsbA, PsbB, PsbC, PsbD, PsbE, PsbF, PsbH, PsbI, PsbJ, PsbK, PsbL, PsbM, PsbT, PsbX, PsbY, PsbZ, Psb30/Ycf12, at least 3 peripheral proteins of the oxygen-evolving complex and a large number of cofactors. It forms dimeric complexes. It depends on The D1/D2 heterodimer binds P680, chlorophylls that are the primary electron donor of PSII, and subsequent electron acceptors. It shares a non-heme iron and each subunit binds pheophytin, quinone, additional chlorophylls, carotenoids and lipids. There is also a Cl(-1) ion associated with D1 and D2, which is required for oxygen evolution. The PSII complex binds additional chlorophylls, carotenoids and specific lipids. as a cofactor.

The protein localises to the plastid. Its subcellular location is the cyanelle thylakoid membrane. It catalyses the reaction 2 a plastoquinone + 4 hnu + 2 H2O = 2 a plastoquinol + O2. In terms of biological role, photosystem II (PSII) is a light-driven water:plastoquinone oxidoreductase that uses light energy to abstract electrons from H(2)O, generating O(2) and a proton gradient subsequently used for ATP formation. It consists of a core antenna complex that captures photons, and an electron transfer chain that converts photonic excitation into a charge separation. The D1/D2 (PsbA/PsbD) reaction center heterodimer binds P680, the primary electron donor of PSII as well as several subsequent electron acceptors. D2 is needed for assembly of a stable PSII complex. In Cyanophora paradoxa, this protein is Photosystem II D2 protein.